Reading from the N-terminus, the 255-residue chain is GTP cyclohydrolase III 1 (255 aa).

The protein belongs to the archaeal-type GTP cyclohydrolase family.

The enzyme catalyses GTP + 3 H2O = 2-amino-5-formylamino-6-(5-phospho-D-ribosylamino)pyrimidin-4(3H)-one + 2 phosphate + 2 H(+). Its function is as follows. Catalyzes the formation of 2-amino-5-formylamino-6-ribofuranosylamino-4(3H)-pyrimidinone ribonucleotide monophosphate and inorganic phosphate from GTP. Also has an independent pyrophosphate phosphohydrolase activity. This is GTP cyclohydrolase III 1 (gch31) from Halobacterium salinarum (strain ATCC 700922 / JCM 11081 / NRC-1) (Halobacterium halobium).